The chain runs to 470 residues: Probable E3 ubiquitin-protein ligase TRIML1 (470 aa).

The RING-type zinc finger occupies 22-63; sequence CFICLDYFSSPVTTECGHSFCLMCLLKSWEEHNTPLSCPECW. Coiled-coil stretches lie at residues 135–170 and 196–235; these read SEAEEQHKEKLQDIINILRKKKKEVQAILNHEKERV and KEEEQLQLQLLEREEKANMKKLRENEIQLTQQIRRLGKMI. The B30.2/SPRY domain occupies 273-470; it reads TELSLCHITG…NTDPLIICHI (198 aa).

As to quaternary structure, interacts with USP5. Testis.

It catalyses the reaction S-ubiquitinyl-[E2 ubiquitin-conjugating enzyme]-L-cysteine + [acceptor protein]-L-lysine = [E2 ubiquitin-conjugating enzyme]-L-cysteine + N(6)-ubiquitinyl-[acceptor protein]-L-lysine.. It functions in the pathway protein modification; protein ubiquitination. Functionally, probable E3 ubiquitin-protein ligase which plays an important role in blastocyst development. Involved in progression of blastocyst stage and subsequent embryo development. The chain is Probable E3 ubiquitin-protein ligase TRIML1 (Triml1) from Mus musculus (Mouse).